Here is a 574-residue protein sequence, read N- to C-terminus: Proline--tRNA ligase (574 aa).

Belongs to the class-II aminoacyl-tRNA synthetase family. ProS type 1 subfamily. As to quaternary structure, homodimer.

The protein resides in the cytoplasm. The enzyme catalyses tRNA(Pro) + L-proline + ATP = L-prolyl-tRNA(Pro) + AMP + diphosphate. In terms of biological role, catalyzes the attachment of proline to tRNA(Pro) in a two-step reaction: proline is first activated by ATP to form Pro-AMP and then transferred to the acceptor end of tRNA(Pro). As ProRS can inadvertently accommodate and process non-cognate amino acids such as alanine and cysteine, to avoid such errors it has two additional distinct editing activities against alanine. One activity is designated as 'pretransfer' editing and involves the tRNA(Pro)-independent hydrolysis of activated Ala-AMP. The other activity is designated 'posttransfer' editing and involves deacylation of mischarged Ala-tRNA(Pro). The misacylated Cys-tRNA(Pro) is not edited by ProRS. This is Proline--tRNA ligase from Nitratidesulfovibrio vulgaris (strain DP4) (Desulfovibrio vulgaris).